The sequence spans 192 residues: Adenylate kinase (192 aa).

Residue 10 to 18 coordinates ATP; that stretch reads GVPGVGGTT.

It belongs to the archaeal adenylate kinase family. As to quaternary structure, monomer.

Its subcellular location is the cytoplasm. The enzyme catalyses AMP + ATP = 2 ADP. In Methanothermococcus thermolithotrophicus (Methanococcus thermolithotrophicus), this protein is Adenylate kinase (adkA).